Here is a 702-residue protein sequence, read N- to C-terminus: Ribosomal RNA large subunit methyltransferase K/L (702 aa).

In terms of domain architecture, THUMP spans 43-154 (LVYQSLMWSR…KETASIALDL (112 aa)).

It belongs to the methyltransferase superfamily. RlmKL family.

The protein resides in the cytoplasm. The catalysed reaction is guanosine(2445) in 23S rRNA + S-adenosyl-L-methionine = N(2)-methylguanosine(2445) in 23S rRNA + S-adenosyl-L-homocysteine + H(+). It carries out the reaction guanosine(2069) in 23S rRNA + S-adenosyl-L-methionine = N(2)-methylguanosine(2069) in 23S rRNA + S-adenosyl-L-homocysteine + H(+). Its function is as follows. Specifically methylates the guanine in position 2445 (m2G2445) and the guanine in position 2069 (m7G2069) of 23S rRNA. The chain is Ribosomal RNA large subunit methyltransferase K/L from Shigella flexneri serotype 5b (strain 8401).